The primary structure comprises 202 residues: Guanylate kinase (202 aa).

The Guanylate kinase-like domain maps to 3–181 (GNLFVVAAPS…ALDDLRAVVR (179 aa)). 10–17 (APSGAGKT) contributes to the ATP binding site.

The protein belongs to the guanylate kinase family.

It localises to the cytoplasm. It carries out the reaction GMP + ATP = GDP + ADP. Functionally, essential for recycling GMP and indirectly, cGMP. The sequence is that of Guanylate kinase from Dechloromonas aromatica (strain RCB).